Here is a 264-residue protein sequence, read N- to C-terminus: tRNA (guanine-N(7)-)-methyltransferase (264 aa).

The segment at 1–39 (MIHDDDPNAPGAPHDDATAAPASATRAAPAAGDDDDANP) is disordered. Over residues 18–31 (TAAPASATRAAPAA) the composition is skewed to low complexity. S-adenosyl-L-methionine-binding residues include Glu-94, Glu-119, Asp-146, and Asp-169. The active site involves Asp-169. Residues Lys-173, Asp-205, and 240-243 (TKFE) each bind substrate.

The protein belongs to the class I-like SAM-binding methyltransferase superfamily. TrmB family.

The catalysed reaction is guanosine(46) in tRNA + S-adenosyl-L-methionine = N(7)-methylguanosine(46) in tRNA + S-adenosyl-L-homocysteine. Its pathway is tRNA modification; N(7)-methylguanine-tRNA biosynthesis. Catalyzes the formation of N(7)-methylguanine at position 46 (m7G46) in tRNA. The sequence is that of tRNA (guanine-N(7)-)-methyltransferase from Burkholderia mallei (strain ATCC 23344).